A 264-amino-acid polypeptide reads, in one-letter code: Thymidylate synthase (264 aa).

R21 is a binding site for dUMP. H51 is a (6R)-5,10-methylene-5,6,7,8-tetrahydrofolate binding site. DUMP is bound at residue 126–127 (RR). C146 acts as the Nucleophile in catalysis. DUMP contacts are provided by residues 166 to 169 (RSCD), N177, and 207 to 209 (HLY). A (6R)-5,10-methylene-5,6,7,8-tetrahydrofolate-binding site is contributed by D169. A263 lines the (6R)-5,10-methylene-5,6,7,8-tetrahydrofolate pocket.

The protein belongs to the thymidylate synthase family. Bacterial-type ThyA subfamily. In terms of assembly, homodimer.

Its subcellular location is the cytoplasm. It carries out the reaction dUMP + (6R)-5,10-methylene-5,6,7,8-tetrahydrofolate = 7,8-dihydrofolate + dTMP. It participates in pyrimidine metabolism; dTTP biosynthesis. In terms of biological role, catalyzes the reductive methylation of 2'-deoxyuridine-5'-monophosphate (dUMP) to 2'-deoxythymidine-5'-monophosphate (dTMP) while utilizing 5,10-methylenetetrahydrofolate (mTHF) as the methyl donor and reductant in the reaction, yielding dihydrofolate (DHF) as a by-product. This enzymatic reaction provides an intracellular de novo source of dTMP, an essential precursor for DNA biosynthesis. The polypeptide is Thymidylate synthase (Shewanella denitrificans (strain OS217 / ATCC BAA-1090 / DSM 15013)).